Reading from the N-terminus, the 387-residue chain is Chaperone protein DnaJ (387 aa).

Residues 6 to 70 enclose the J domain; it reads DYYEILGLSR…EKRAQYDRFG (65 aa). The segment at 130 to 212 adopts a CR-type zinc-finger fold; that stretch reads GVRKDIDVPR…CSGTGRVRNT (83 aa). Zn(2+)-binding residues include C143, C146, C160, C163, C186, C189, C200, and C203. CXXCXGXG motif repeat units lie at residues 143–150, 160–167, 186–193, and 200–207; these read CSNCSGTG, CPTCGGTG, CSTCRGKG, and CPVCSGTG. The tract at residues 143-162 is disordered; sequence CSNCSGTGARPGTSPKRCPT.

It belongs to the DnaJ family. Homodimer. The cofactor is Zn(2+).

The protein localises to the cytoplasm. Participates actively in the response to hyperosmotic and heat shock by preventing the aggregation of stress-denatured proteins and by disaggregating proteins, also in an autonomous, DnaK-independent fashion. Unfolded proteins bind initially to DnaJ; upon interaction with the DnaJ-bound protein, DnaK hydrolyzes its bound ATP, resulting in the formation of a stable complex. GrpE releases ADP from DnaK; ATP binding to DnaK triggers the release of the substrate protein, thus completing the reaction cycle. Several rounds of ATP-dependent interactions between DnaJ, DnaK and GrpE are required for fully efficient folding. Also involved, together with DnaK and GrpE, in the DNA replication of plasmids through activation of initiation proteins. The sequence is that of Chaperone protein DnaJ from Methanosarcina thermophila.